A 208-amino-acid polypeptide reads, in one-letter code: N-(5'-phosphoribosyl)anthranilate isomerase (208 aa).

This sequence belongs to the TrpF family.

The enzyme catalyses N-(5-phospho-beta-D-ribosyl)anthranilate = 1-(2-carboxyphenylamino)-1-deoxy-D-ribulose 5-phosphate. It functions in the pathway amino-acid biosynthesis; L-tryptophan biosynthesis; L-tryptophan from chorismate: step 3/5. This is N-(5'-phosphoribosyl)anthranilate isomerase from Chlamydia trachomatis serovar L2 (strain ATCC VR-902B / DSM 19102 / 434/Bu).